We begin with the raw amino-acid sequence, 151 residues long: NADH dehydrogenase [ubiquinone] 1 beta subcomplex subunit 11, mitochondrial (151 aa).

Residues 1-29 (MAARLLSLYGRCLSAAGAMRGLPAARVRW) constitute a mitochondrion transit peptide. Residues 40-62 (GVEKKRQREPTMQWQEDPEPEDE) are disordered. The chain crosses the membrane as a helical span at residues 87–107 (AVFFFGFSIVLVFGTTFVAYV).

It belongs to the complex I NDUFB11 subunit family. Complex I is composed of 45 different subunits. Interacts with BCAP31.

The protein resides in the mitochondrion inner membrane. Its function is as follows. Accessory subunit of the mitochondrial membrane respiratory chain NADH dehydrogenase (Complex I), that is believed not to be involved in catalysis. Complex I functions in the transfer of electrons from NADH to the respiratory chain. The immediate electron acceptor for the enzyme is believed to be ubiquinone. The protein is NADH dehydrogenase [ubiquinone] 1 beta subcomplex subunit 11, mitochondrial (Ndufb11) of Mus musculus (Mouse).